The sequence spans 449 residues: MPKATIIGLGRSGIAAARVLKGDNWEVTLSDRSNSPNLQQTQGQLQQEGITVKLGDSFTLNPEDLPNLIVVSPGVPWDIPVLVEARDQGIDTIGELELAWRYLNGCSWVGITGTNGKTTTTALIAAIFKAAGLNAPACGNIGYAACELALTQQSYDWIIAEISSYQIESSATLSPKIGIWTTFTPDHLERHKTLDNYYQIKASLLSRCRRQIFNGDDPYLHNIGLSQWKDSYWTSVKGKEALLCDPSKGIYLQDNWIVAFGELIAPINLFKMVGEHNQQNLLMAVGAARLADINKDAIAEAMATFSGVPHRLELIRTIAGVDYINDSKATNYDAAQVGLSSVEAPVILIAGGQAKKGDDTEWIKLIKAKVATVLLIGEAASTFAQRLQESDYYAYEIVETMENAVERSASLATDKGVKIVLLSPACASFDQYQSFEHRGDHFRELCLQL.

113–119 (GTNGKTT) is a binding site for ATP.

This sequence belongs to the MurCDEF family.

It localises to the cytoplasm. The enzyme catalyses UDP-N-acetyl-alpha-D-muramoyl-L-alanine + D-glutamate + ATP = UDP-N-acetyl-alpha-D-muramoyl-L-alanyl-D-glutamate + ADP + phosphate + H(+). The protein operates within cell wall biogenesis; peptidoglycan biosynthesis. In terms of biological role, cell wall formation. Catalyzes the addition of glutamate to the nucleotide precursor UDP-N-acetylmuramoyl-L-alanine (UMA). In Gloeothece citriformis (strain PCC 7424) (Cyanothece sp. (strain PCC 7424)), this protein is UDP-N-acetylmuramoylalanine--D-glutamate ligase.